An 862-amino-acid chain; its full sequence is Probable glutaminase ARB_05535/05536 (862 aa).

The N-terminal stretch at 1-19 (MLSWVLLAWAVACSALAGA) is a signal peptide. N-linked (GlcNAc...) asparagine glycosylation is found at N106, N273, N436, N448, N486, N610, and N744. Positions 798 to 862 (FLDDKDNNSP…SQMTIVNEND (65 aa)) are disordered. Polar residues predominate over residues 853–862 (SQMTIVNEND).

The protein belongs to the fungal glutaminase gtaA family.

The protein resides in the secreted. It catalyses the reaction L-glutamine + H2O = L-glutamate + NH4(+). Glutaminase catalyzes the hydrolysis of glutamine to glutamic acid and plays a key role in nitrogen metabolism. The sequence is that of Probable glutaminase ARB_05535/05536 from Arthroderma benhamiae (strain ATCC MYA-4681 / CBS 112371) (Trichophyton mentagrophytes).